Reading from the N-terminus, the 289-residue chain is ATP phosphoribosyltransferase (289 aa).

This sequence belongs to the ATP phosphoribosyltransferase family. Long subfamily. It depends on Mg(2+) as a cofactor.

It is found in the cytoplasm. It carries out the reaction 1-(5-phospho-beta-D-ribosyl)-ATP + diphosphate = 5-phospho-alpha-D-ribose 1-diphosphate + ATP. The protein operates within amino-acid biosynthesis; L-histidine biosynthesis; L-histidine from 5-phospho-alpha-D-ribose 1-diphosphate: step 1/9. With respect to regulation, feedback inhibited by histidine. In terms of biological role, catalyzes the condensation of ATP and 5-phosphoribose 1-diphosphate to form N'-(5'-phosphoribosyl)-ATP (PR-ATP). Has a crucial role in the pathway because the rate of histidine biosynthesis seems to be controlled primarily by regulation of HisG enzymatic activity. In Koribacter versatilis (strain Ellin345), this protein is ATP phosphoribosyltransferase.